A 642-amino-acid chain; its full sequence is Threonine--tRNA ligase (642 aa).

The TGS domain occupies 1-61 (MPVITLPDGS…ETDSDLSIIT (61 aa)). A catalytic region spans residues 243-534 (DHRKIGKQLD…LIEEYAGKFP (292 aa)). Zn(2+) is bound by residues Cys334, His385, and His511.

Belongs to the class-II aminoacyl-tRNA synthetase family. As to quaternary structure, homodimer. It depends on Zn(2+) as a cofactor.

The protein resides in the cytoplasm. It catalyses the reaction tRNA(Thr) + L-threonine + ATP = L-threonyl-tRNA(Thr) + AMP + diphosphate + H(+). Catalyzes the attachment of threonine to tRNA(Thr) in a two-step reaction: L-threonine is first activated by ATP to form Thr-AMP and then transferred to the acceptor end of tRNA(Thr). Also edits incorrectly charged L-seryl-tRNA(Thr). This Shewanella pealeana (strain ATCC 700345 / ANG-SQ1) protein is Threonine--tRNA ligase.